Reading from the N-terminus, the 357-residue chain is Sulfate/thiosulfate import ATP-binding protein CysA (357 aa).

In terms of domain architecture, ABC transporter spans 3 to 237 (IQIQGVSKQY…PASPFVYDFL (235 aa)). 35–42 (GPSGSGKT) contributes to the ATP binding site.

The protein belongs to the ABC transporter superfamily. Sulfate/tungstate importer (TC 3.A.1.6) family. As to quaternary structure, the complex is composed of two ATP-binding proteins (CysA), two transmembrane proteins (CysT and CysW) and a solute-binding protein (CysP).

The protein resides in the cell membrane. It catalyses the reaction sulfate(out) + ATP + H2O = sulfate(in) + ADP + phosphate + H(+). It carries out the reaction thiosulfate(out) + ATP + H2O = thiosulfate(in) + ADP + phosphate + H(+). In terms of biological role, part of the ABC transporter complex CysAWTP involved in sulfate/thiosulfate import. Responsible for energy coupling to the transport system. The protein is Sulfate/thiosulfate import ATP-binding protein CysA of Bacillus cereus (strain ATCC 10987 / NRS 248).